The primary structure comprises 348 residues: Probable dual-specificity RNA methyltransferase RlmN (348 aa).

E95 (proton acceptor) is an active-site residue. A Radical SAM core domain is found at 101–335 (SGNRLTICVS…VSLRASRGLD (235 aa)). C108 and C340 are disulfide-bonded. Residues C115, C119, and C122 each coordinate [4Fe-4S] cluster. Residues 162 to 163 (GE), S192, 221 to 223 (SLH), and N297 contribute to the S-adenosyl-L-methionine site. Residue C340 is the S-methylcysteine intermediate of the active site.

This sequence belongs to the radical SAM superfamily. RlmN family. [4Fe-4S] cluster is required as a cofactor.

It localises to the cytoplasm. It catalyses the reaction adenosine(2503) in 23S rRNA + 2 reduced [2Fe-2S]-[ferredoxin] + 2 S-adenosyl-L-methionine = 2-methyladenosine(2503) in 23S rRNA + 5'-deoxyadenosine + L-methionine + 2 oxidized [2Fe-2S]-[ferredoxin] + S-adenosyl-L-homocysteine. The catalysed reaction is adenosine(37) in tRNA + 2 reduced [2Fe-2S]-[ferredoxin] + 2 S-adenosyl-L-methionine = 2-methyladenosine(37) in tRNA + 5'-deoxyadenosine + L-methionine + 2 oxidized [2Fe-2S]-[ferredoxin] + S-adenosyl-L-homocysteine. Functionally, specifically methylates position 2 of adenine 2503 in 23S rRNA and position 2 of adenine 37 in tRNAs. This is Probable dual-specificity RNA methyltransferase RlmN from Prochlorococcus marinus (strain SARG / CCMP1375 / SS120).